A 279-amino-acid chain; its full sequence is Large ribosomal subunit protein uL2 (279 aa).

Disordered regions lie at residues 29-53 (PEKS…TTRH) and 224-279 (VAMN…KKRK). Residues 253–268 (KEGRTRHPNKESDKLI) are compositionally biased toward basic and acidic residues. Positions 269–279 (VRRRNAGKKRK) are enriched in basic residues.

It belongs to the universal ribosomal protein uL2 family. In terms of assembly, part of the 50S ribosomal subunit. Forms a bridge to the 30S subunit in the 70S ribosome.

One of the primary rRNA binding proteins. Required for association of the 30S and 50S subunits to form the 70S ribosome, for tRNA binding and peptide bond formation. It has been suggested to have peptidyltransferase activity; this is somewhat controversial. Makes several contacts with the 16S rRNA in the 70S ribosome. This is Large ribosomal subunit protein uL2 from Leifsonia xyli subsp. xyli (strain CTCB07).